The chain runs to 169 residues: uncharacterized protein (169 aa).

A helical transmembrane segment spans residues 97–117 (IVIFCILVIVAFVIWLVVWLF). Residues 137–169 (NYSGLPTPQPTPTHYPAEQYSYDPARDRDNYRY) are disordered. The segment covering 160-169 (PARDRDNYRY) has biased composition (basic and acidic residues).

It is found in the membrane. This is an uncharacterized protein from Caenorhabditis elegans.